We begin with the raw amino-acid sequence, 620 residues long: MDSHTLIQALIYLGSAALIVPVAVRLGLGSVLGYLIAGGLIGPWGLRLVTDAQAILHFAEIGVVLMLFVIGLELDPQRLWKLRASVFGGGALQMGACGLLLGGFCVALGLRWQVALLIGLTLALSSTAIAMQAMNERNLTASQMGRSAFAVLLFQDIAAIPLVAMIPLLAASGEATTASAFFLSALKVVGALALVVLLGRFVARPALRFVARSGLREVFSAVALFLVFGFGLLLEEAGLSMAMGAFLAGVLLASSEYRHALESDIEPFKGLLLGLFFIGVGMSIDFGTLVAHPLRVLTLLFGFLIIKTVTLWLVAKPLKVPGRQRRWFAVLLGQGSEFAFVIFGAARSAEVLDAEWAKALTLAVALSMAATPLLLVLLTRLEKSGQQQAREADEIDEEQPRVIIAGFGRFGQIAGRLLLSSGVKMVVLDHDPDHIETLRKFGMKVFYGDATRVDLLESAGVAKAEVLINAIDDPQANLQLTELVQTHFPQVRIIARARDVDHYIRLRQAGVAQPERETFEGALRVGRMALEELGIGSYEARERADLFRCYNQQMVDEMAEGDNDTSARAATFRRTSAMLTEIISEDRAHLSLIQRHGWQGTREGKHTGNDADEPEVKPQP.

The next 12 helical transmembrane spans lie at 4–24 (HTLI…PVAV), 26–46 (LGLG…PWGL), 54–74 (AILH…GLEL), 86–106 (VFGG…GFCV), 114–134 (VALL…MQAM), 149–169 (FAVL…IPLL), 178–198 (ASAF…VVLL), 218–238 (VFSA…EEAG), 271–291 (LLLG…TLVA), 296–316 (VLTL…LVAK), 326–346 (RWFA…FGAA), and 359–379 (ALTL…VLLT). Residues 399–518 (QPRVIIAGFG…AGVAQPERET (120 aa)) form the RCK N-terminal domain. The segment at 596–620 (HGWQGTREGKHTGNDADEPEVKPQP) is disordered.

It belongs to the monovalent cation:proton antiporter 2 (CPA2) transporter (TC 2.A.37) family. KefC subfamily. In terms of assembly, homodimer. Interacts with the regulatory subunit KefF.

It localises to the cell inner membrane. In terms of biological role, pore-forming subunit of a potassium efflux system that confers protection against electrophiles. Catalyzes K(+)/H(+) antiport. This is Glutathione-regulated potassium-efflux system protein KefC from Cronobacter sakazakii (strain ATCC BAA-894) (Enterobacter sakazakii).